Reading from the N-terminus, the 79-residue chain is Putative transmembrane protein ORF17 (79 aa).

The next 2 helical transmembrane spans lie at leucine 8 to tyrosine 28 and valine 50 to isoleucine 70.

The protein localises to the host membrane. This is Putative transmembrane protein ORF17 from Haloarcula hispanica (His1V).